Reading from the N-terminus, the 237-residue chain is Ribosomal RNA small subunit methyltransferase G (237 aa).

Residues Gly-76, Phe-81, 128–129 (VE), and Arg-147 each bind S-adenosyl-L-methionine.

Belongs to the methyltransferase superfamily. RNA methyltransferase RsmG family.

Its subcellular location is the cytoplasm. Functionally, specifically methylates the N7 position of a guanine in 16S rRNA. The polypeptide is Ribosomal RNA small subunit methyltransferase G (Prochlorococcus marinus (strain MIT 9215)).